An 860-amino-acid chain; its full sequence is MQEQYRPEDIETQVQLHWQEKQTFKVTEDTSKEKYYCLSMLPYPSGRLHMGHVRNYTIGDVISRYQRMLGKNVLQPIGWDAFGLPAEGAAVKNNTAPAPWTYDNIEYMKNQLKLLGFGYDWDREIATCSPDYYRWEQWFFTKLYEKGMVYKKTSAVNWCPHDLTVLANEQVIDGCCWRCDTKVERKEIPQWFIKITDYADQLLNDLDTLESWPEQVKTMQRNWIGRSEGVDIVFNVADSEEKLSVYTTRPDTFMGVTYVAVAAGHPLSLQAAATNPALADFVAECRNTKVAEAEMATMEKKGMATGLYAIHPLTGEKLPIWAANFVLMDYGTGAVMAVPGHDARDWEFATKYNLPIKPVILAADGSEPDLSQEAMTEKGILFNSGEFDGLNYEDGFNAVADKLVALGVGQRKVNYRLRDWGVSRQRYWGAPIPMVTLEDGTVVPTPEDQLPVILPEDVVMDGITSPIKADPEWAKTTVNGVPGLRETDTFDTFMESSWYYARYTCPQFDKGMLDPAAANYWLPVDQYVGGIEHAIMHLMYFRFFHKLLRDAGLVDSDEPAKRLLCQGMVLADAFYYSGSNGERIWVSPVDAIVERDDKGRIIKATDAEGHELVYAGMSKMSKSKNNGIDPQVMVEKYGADTVRLFMMFASPAEMTLEWQESGVEGANRFLKRVWRLAYDHTAKGATAPLDVANLTEEQKSLRRDLHKTIAKVTDDVGRRQTFNTAIAAVMELMNKLGRAPQETEQDRALLQEALLAVVRMLYPFTPHVCFSLWQALGGEGDIDTAPWPVADEQAMVEDSKLVVVQVNGKVRGRITVPADATEQQVRERAGQEHLVAKYLDGVTVRKVIYVPGKLLNLVVG.

The 'HIGH' region motif lies at 42–52 (PYPSGRLHMGH). The short motif at 619-623 (KMSKS) is the 'KMSKS' region element. Lysine 622 serves as a coordination point for ATP.

The protein belongs to the class-I aminoacyl-tRNA synthetase family.

It localises to the cytoplasm. It catalyses the reaction tRNA(Leu) + L-leucine + ATP = L-leucyl-tRNA(Leu) + AMP + diphosphate. This Yersinia enterocolitica serotype O:8 / biotype 1B (strain NCTC 13174 / 8081) protein is Leucine--tRNA ligase.